Reading from the N-terminus, the 509-residue chain is ESX-2 secretion system protein eccD2 (509 aa).

11 helical membrane-spanning segments follow: residues 135-155 (LTAA…VLAL), 170-190 (AMAG…WWGW), 196-216 (LFSG…ACAP), 222-242 (AAHA…IGVA), 248-268 (QTAV…VAAV), 281-301 (ICVL…ALWV), 364-384 (VQVG…WGVL), 389-409 (PWAW…ITQG), 418-438 (AVAL…KYAL), 449-469 (LWPA…ALVV), and 487-507 (VLAM…FAWL).

This sequence belongs to the EccD/Snm4 family. As to quaternary structure, part of the ESX-2 / type VII secretion system (T7SS), which is composed of cytosolic and membrane components.

It is found in the cell membrane. The sequence is that of ESX-2 secretion system protein eccD2 (eccD2) from Mycobacterium tuberculosis (strain CDC 1551 / Oshkosh).